Here is a 479-residue protein sequence, read N- to C-terminus: 3-isopropylmalate dehydratase large subunit (479 aa).

[4Fe-4S] cluster-binding residues include C350, C415, and C418.

The protein belongs to the aconitase/IPM isomerase family. LeuC type 1 subfamily. As to quaternary structure, heterodimer of LeuC and LeuD. It depends on [4Fe-4S] cluster as a cofactor.

It catalyses the reaction (2R,3S)-3-isopropylmalate = (2S)-2-isopropylmalate. Its pathway is amino-acid biosynthesis; L-leucine biosynthesis; L-leucine from 3-methyl-2-oxobutanoate: step 2/4. Catalyzes the isomerization between 2-isopropylmalate and 3-isopropylmalate, via the formation of 2-isopropylmaleate. This is 3-isopropylmalate dehydratase large subunit from Caulobacter vibrioides (strain ATCC 19089 / CIP 103742 / CB 15) (Caulobacter crescentus).